The primary structure comprises 151 residues: Nucleoside diphosphate kinase (151 aa).

ATP-binding residues include lysine 11, phenylalanine 59, arginine 87, threonine 93, arginine 104, and asparagine 114. Histidine 117 serves as the catalytic Pros-phosphohistidine intermediate.

Belongs to the NDK family. In terms of assembly, homotetramer. It depends on Mg(2+) as a cofactor.

It is found in the cytoplasm. It carries out the reaction a 2'-deoxyribonucleoside 5'-diphosphate + ATP = a 2'-deoxyribonucleoside 5'-triphosphate + ADP. It catalyses the reaction a ribonucleoside 5'-diphosphate + ATP = a ribonucleoside 5'-triphosphate + ADP. Functionally, major role in the synthesis of nucleoside triphosphates other than ATP. The ATP gamma phosphate is transferred to the NDP beta phosphate via a ping-pong mechanism, using a phosphorylated active-site intermediate. The sequence is that of Nucleoside diphosphate kinase from Prochlorococcus marinus (strain NATL1A).